We begin with the raw amino-acid sequence, 441 residues long: Probable glycine dehydrogenase (decarboxylating) subunit 1 (441 aa).

Belongs to the GcvP family. N-terminal subunit subfamily. As to quaternary structure, the glycine cleavage system is composed of four proteins: P, T, L and H. In this organism, the P 'protein' is a heterodimer of two subunits.

The enzyme catalyses N(6)-[(R)-lipoyl]-L-lysyl-[glycine-cleavage complex H protein] + glycine + H(+) = N(6)-[(R)-S(8)-aminomethyldihydrolipoyl]-L-lysyl-[glycine-cleavage complex H protein] + CO2. The glycine cleavage system catalyzes the degradation of glycine. The P protein binds the alpha-amino group of glycine through its pyridoxal phosphate cofactor; CO(2) is released and the remaining methylamine moiety is then transferred to the lipoamide cofactor of the H protein. In Halobacterium salinarum (strain ATCC 700922 / JCM 11081 / NRC-1) (Halobacterium halobium), this protein is Probable glycine dehydrogenase (decarboxylating) subunit 1.